The chain runs to 206 residues: Large ribosomal subunit protein uL3 (206 aa).

Residues 127 to 151 are disordered; that stretch reads SGGPSSHGSKFHRHLGGTGQATTPA.

Belongs to the universal ribosomal protein uL3 family. Part of the 50S ribosomal subunit. Forms a cluster with proteins L14 and L19.

One of the primary rRNA binding proteins, it binds directly near the 3'-end of the 23S rRNA, where it nucleates assembly of the 50S subunit. In Borrelia garinii subsp. bavariensis (strain ATCC BAA-2496 / DSM 23469 / PBi) (Borreliella bavariensis), this protein is Large ribosomal subunit protein uL3.